The following is a 182-amino-acid chain: MEKNQKEIEKELEELRKREKELEEKIQKLETIAKNSNLRVAELQREIDYLKERYRRDLEEQRKFCYEKFAYDLLEVMDNFERALEYGRQAQDVKSILLGIEMIYSEMKKIFEKYGIREIPVEGKEFDPYVAEAVEKVETDQYPPNTVVKVIRKGYYIHDKVLRPARVAVAVPPQEEEGEEIT.

Belongs to the GrpE family. Homodimer.

Its subcellular location is the cytoplasm. Functionally, participates actively in the response to hyperosmotic and heat shock by preventing the aggregation of stress-denatured proteins, in association with DnaK and GrpE. It is the nucleotide exchange factor for DnaK and may function as a thermosensor. Unfolded proteins bind initially to DnaJ; upon interaction with the DnaJ-bound protein, DnaK hydrolyzes its bound ATP, resulting in the formation of a stable complex. GrpE releases ADP from DnaK; ATP binding to DnaK triggers the release of the substrate protein, thus completing the reaction cycle. Several rounds of ATP-dependent interactions between DnaJ, DnaK and GrpE are required for fully efficient folding. The protein is Protein GrpE of Aquifex aeolicus (strain VF5).